The sequence spans 474 residues: Glutathione synthetase (474 aa).

Position 2 is an N-acetylalanine (A2). A substrate-binding site is contributed by R125. An ATP-binding site is contributed by E144. Mg(2+)-binding residues include E144 and N146. Substrate-binding positions include 148-151 (ISAS), 214-216 (ERN), Q220, and 267-270 (RDGY). ATP contacts are provided by residues K305, 364 to 373 (KPQREGGGNN), Y375, and 398 to 401 (MEKI). E368 lines the Mg(2+) pocket. S415 is modified (phosphoserine). E425 is a binding site for ATP. R450 contacts substrate. K452 and D458 together coordinate ATP. Residue 461-462 (VA) coordinates substrate.

Belongs to the eukaryotic GSH synthase family. As to quaternary structure, homodimer. Mg(2+) serves as cofactor.

The enzyme catalyses gamma-L-glutamyl-L-cysteine + glycine + ATP = glutathione + ADP + phosphate + H(+). The catalysed reaction is gamma-L-glutamyl-(2S)-2-aminobutanoate + glycine + ATP = ophthalmate + ADP + phosphate + H(+). It functions in the pathway sulfur metabolism; glutathione biosynthesis; glutathione from L-cysteine and L-glutamate: step 2/2. Its function is as follows. Catalyzes the production of glutathione from gamma-glutamylcysteine and glycine in an ATP-dependent manner. Glutathione (gamma-glutamylcysteinylglycine, GSH) is the most abundant intracellular thiol in living aerobic cells and is required for numerous processes including the protection of cells against oxidative damage, amino acid transport, the detoxification of foreign compounds, the maintenance of protein sulfhydryl groups in a reduced state and acts as a cofactor for a number of enzymes. Participates in ophthalmate biosynthesis in hepatocytes. This chain is Glutathione synthetase, found in Mus musculus (Mouse).